The primary structure comprises 199 residues: Holliday junction resolvase RecU (199 aa).

The Mg(2+) site is built by Thr82, Asp84, Glu97, and Gln116.

Belongs to the RecU family. Mg(2+) serves as cofactor.

Its subcellular location is the cytoplasm. The catalysed reaction is Endonucleolytic cleavage at a junction such as a reciprocal single-stranded crossover between two homologous DNA duplexes (Holliday junction).. Functionally, endonuclease that resolves Holliday junction intermediates in genetic recombination. Cleaves mobile four-strand junctions by introducing symmetrical nicks in paired strands. Promotes annealing of linear ssDNA with homologous dsDNA. Required for DNA repair, homologous recombination and chromosome segregation. The sequence is that of Holliday junction resolvase RecU from Streptococcus pyogenes serotype M1.